The primary structure comprises 151 residues: MPVWVDADACPKVIKEVLFRAAERTETPVILVANQPLRVPPSKFIRARQVPAGFDVADNEIVRCCEPGDLVVTADIPLAAEVIAKGAVALNPRGERYSEATIRERLTMRDFMDTLRASGIQTGGPDALSQRDRQQFAAELDKWLSGRKRQA.

The protein belongs to the UPF0178 family.

The polypeptide is UPF0178 protein ESA_02916 (Cronobacter sakazakii (strain ATCC BAA-894) (Enterobacter sakazakii)).